We begin with the raw amino-acid sequence, 457 residues long: Argininosuccinate lyase (457 aa).

Belongs to the lyase 1 family. Argininosuccinate lyase subfamily.

It localises to the cytoplasm. The catalysed reaction is 2-(N(omega)-L-arginino)succinate = fumarate + L-arginine. The protein operates within amino-acid biosynthesis; L-arginine biosynthesis; L-arginine from L-ornithine and carbamoyl phosphate: step 3/3. The sequence is that of Argininosuccinate lyase from Pectobacterium atrosepticum (strain SCRI 1043 / ATCC BAA-672) (Erwinia carotovora subsp. atroseptica).